The following is a 162-amino-acid chain: HTH-type transcriptional regulator IscR (162 aa).

The HTH rrf2-type domain occupies 2–131 (RLTSKGRYAV…NNITLGELVN (130 aa)). The segment at residues 28-51 (LADISERQGISLSYLEQLFSRLRK) is a DNA-binding region (H-T-H motif). Residues Cys-92, Cys-98, and Cys-104 each contribute to the [2Fe-2S] cluster site.

It depends on [2Fe-2S] cluster as a cofactor.

Functionally, regulates the transcription of several operons and genes involved in the biogenesis of Fe-S clusters and Fe-S-containing proteins. In Shigella sonnei (strain Ss046), this protein is HTH-type transcriptional regulator IscR.